Consider the following 104-residue polypeptide: Replication factor A protein 3 (104 aa).

The protein belongs to the replication factor A protein 3 family. As to quaternary structure, component of the heterotrimeric canonical replication protein A complex (RPA).

The protein resides in the nucleus. Its function is as follows. As part of the replication protein A (RPA/RP-A), a single-stranded DNA-binding heterotrimeric complex, may play an essential role in DNA replication, recombination and repair. Binds and stabilizes single-stranded DNA intermediates, preventing complementary DNA reannealing and recruiting different proteins involved in DNA metabolism. This chain is Replication factor A protein 3 (ssb3), found in Schizosaccharomyces pombe (strain 972 / ATCC 24843) (Fission yeast).